Here is a 310-residue protein sequence, read N- to C-terminus: GTPase Era (310 aa).

The 168-residue stretch at 17–184 (RSGFVALIGA…MDYLAERLPE (168 aa)) folds into the Era-type G domain. A G1 region spans residues 25–32 (GATNAGKS). 25–32 (GATNAGKS) is a GTP binding site. The G2 stretch occupies residues 51–55 (QTTRA). Positions 72–75 (DTPG) are G3. Residues 72–76 (DTPGI) and 134–137 (NKVD) contribute to the GTP site. Positions 134 to 137 (NKVD) are G4. The G5 stretch occupies residues 163 to 165 (ISA). Positions 215-292 (LHQELPYASH…HLFLFVKVRE (78 aa)) constitute a KH type-2 domain.

It belongs to the TRAFAC class TrmE-Era-EngA-EngB-Septin-like GTPase superfamily. Era GTPase family. As to quaternary structure, monomer.

The protein resides in the cytoplasm. The protein localises to the cell inner membrane. Its function is as follows. An essential GTPase that binds both GDP and GTP, with rapid nucleotide exchange. Plays a role in 16S rRNA processing and 30S ribosomal subunit biogenesis and possibly also in cell cycle regulation and energy metabolism. The polypeptide is GTPase Era (Sinorhizobium medicae (strain WSM419) (Ensifer medicae)).